The primary structure comprises 1342 residues: Receptor tyrosine-protein kinase erbB-3 (1342 aa).

Residues 1-19 form the signal peptide; it reads MRANDALQVLGLLFSLARG. At 20-643 the chain is on the extracellular side; that stretch reads SEVGNSQAVC…LVLIGKTHLT (624 aa). C29 and C56 form a disulfide bridge. Residue N126 is glycosylated (N-linked (GlcNAc...) asparagine). Cystine bridges form between C156–C183, C186–C194, C190–C202, C210–C218, C214–C226, C227–C235, C231–C243, C246–C255, C259–C286, C290–C301, C305–C320, and C323–C327. A glycan (N-linked (GlcNAc...) asparagine) is linked at N250. Residues N353, N408, N414, N437, and N469 are each glycosylated (N-linked (GlcNAc...) asparagine). 10 disulfides stabilise this stretch: C500-C509, C504-C517, C520-C529, C533-C549, C552-C565, C556-C573, C576-C585, C589-C610, C613-C621, and C617-C629. N522 is a glycosylation site (N-linked (GlcNAc...) asparagine). N-linked (GlcNAc...) asparagine glycosylation occurs at N566. An N-linked (GlcNAc...) asparagine glycan is attached at N616. Residues 644-664 form a helical membrane-spanning segment; that stretch reads MALTVIAGLVVIFMMLGGTFL. The Cytoplasmic portion of the chain corresponds to 665–1342; it reads YWRGRRIQNK…LFPKANAQRT (678 aa). At S686 the chain carries Phosphoserine. A Protein kinase domain is found at 709 to 966; it reads LRKLKVLGSG…TFKELANEFT (258 aa). Residues 715–723, K742, 788–790, and 834–839 each bind ATP; these read LGSGVFGTV, QYL, and NLAARN. N834 acts as the Proton acceptor in catalysis. Disordered stretches follow at residues 980 to 999 and 1033 to 1152; these read RESG…TNKK and LPVG…PGLE. S982 is subject to Phosphoserine. The span at 1042 to 1075 shows a compositional bias: polar residues; sequence RGSQSLLSPSSGYMPMNQGNLGESCQESAVSGSS.

The protein belongs to the protein kinase superfamily. Tyr protein kinase family. EGF receptor subfamily. Monomer and homodimer. Heterodimer with each of the other ERBB receptors (Potential). Interacts with CSPG5. Interacts with GRB7. Interacts with MUC1. Interacts with MYOC. Interacts with isoform 2 of PA2G4. Found in a ternary complex with NRG1 and ITGAV:ITGB3 or ITGA6:ITGB4. In terms of processing, autophosphorylated. Ligand-binding increases phosphorylation on tyrosine residues and promotes its association with the p85 subunit of phosphatidylinositol 3-kinase. Epithelial tissues and brain.

It localises to the cell membrane. The protein localises to the secreted. It carries out the reaction L-tyrosyl-[protein] + ATP = O-phospho-L-tyrosyl-[protein] + ADP + H(+). Tyrosine-protein kinase that plays an essential role as cell surface receptor for neuregulins. Binds to neuregulin-1 (NRG1) and is activated by it; ligand-binding increases phosphorylation on tyrosine residues and promotes its association with the p85 subunit of phosphatidylinositol 3-kinase. May also be activated by CSPG5. Involved in the regulation of myeloid cell differentiation. The chain is Receptor tyrosine-protein kinase erbB-3 (ERBB3) from Homo sapiens (Human).